The chain runs to 131 residues: Phosphomevalonate dehydratase small subunit (131 aa).

Ser-62 acts as the Proton acceptor in catalysis.

It belongs to the AcnX type II small subunit family. As to quaternary structure, heterodimer composed of a large subunit (PMDh-L) and a small subunit (PMDh-S).

It carries out the reaction (R)-5-phosphomevalonate = (2E)-3-methyl-5-phosphooxypent-2-enoate + H2O. It participates in isoprenoid biosynthesis; isopentenyl diphosphate biosynthesis via mevalonate pathway. Component of a hydro-lyase that catalyzes the dehydration of mevalonate 5-phosphate (MVA5P) to form trans-anhydromevalonate 5-phosphate (tAHMP). Involved in the archaeal mevalonate (MVA) pathway, which provides fundamental precursors for isoprenoid biosynthesis, such as isopentenyl diphosphate (IPP) and dimethylallyl diphosphate (DMAPP). The sequence is that of Phosphomevalonate dehydratase small subunit from Thermococcus gammatolerans (strain DSM 15229 / JCM 11827 / EJ3).